We begin with the raw amino-acid sequence, 320 residues long: tRNA pseudouridine synthase B (320 aa).

Catalysis depends on Asp-49, which acts as the Nucleophile.

Belongs to the pseudouridine synthase TruB family. Type 1 subfamily.

It catalyses the reaction uridine(55) in tRNA = pseudouridine(55) in tRNA. Its function is as follows. Responsible for synthesis of pseudouridine from uracil-55 in the psi GC loop of transfer RNAs. This Bartonella bacilliformis (strain ATCC 35685 / KC583 / Herrer 020/F12,63) protein is tRNA pseudouridine synthase B.